The chain runs to 157 residues: Cytochrome c-type biogenesis protein CcmE (157 aa).

Over 1–7 (MTPRQRR) the chain is Cytoplasmic. The chain crosses the membrane as a helical; Signal-anchor for type II membrane protein span at residues 8–28 (LGLLAAALACCGVAAALVLNA). Residues 29 to 157 (FRANLVFFFS…GAMAAQELRR (129 aa)) lie on the Periplasmic side of the membrane. H123 and Y127 together coordinate heme.

Belongs to the CcmE/CycJ family.

It localises to the cell inner membrane. Functionally, heme chaperone required for the biogenesis of c-type cytochromes. Transiently binds heme delivered by CcmC and transfers the heme to apo-cytochromes in a process facilitated by CcmF and CcmH. The polypeptide is Cytochrome c-type biogenesis protein CcmE (Cupriavidus taiwanensis (strain DSM 17343 / BCRC 17206 / CCUG 44338 / CIP 107171 / LMG 19424 / R1) (Ralstonia taiwanensis (strain LMG 19424))).